Reading from the N-terminus, the 193-residue chain is Ion-translocating oxidoreductase complex subunit A (193 aa).

The next 6 membrane-spanning stretches (helical) occupy residues 5-25 (ILLI…FLGL), 39-59 (IGMG…AYLV), 65-85 (IPLE…AVIV), 102-122 (LLGI…VALL), 134-154 (VLYG…FAAL), and 171-191 (SIAL…TGLV).

Belongs to the NqrDE/RnfAE family. The complex is composed of six subunits: RnfA, RnfB, RnfC, RnfD, RnfE and RnfG.

It is found in the cell inner membrane. In terms of biological role, part of a membrane-bound complex that couples electron transfer with translocation of ions across the membrane. This is Ion-translocating oxidoreductase complex subunit A from Actinobacillus pleuropneumoniae serotype 5b (strain L20).